The primary structure comprises 61 residues: Small ribosomal subunit protein bS21 (61 aa).

Positions Lys40–Phe61 are disordered. Basic residues predominate over residues Val43 to Phe61.

Belongs to the bacterial ribosomal protein bS21 family.

This is Small ribosomal subunit protein bS21 from Ligilactobacillus salivarius (strain UCC118) (Lactobacillus salivarius).